A 515-amino-acid chain; its full sequence is Serine/threonine-protein phosphatase PP-Z (515 aa).

The segment at 1-186 (MGQGSSKHAD…SSTDPDDPET (186 aa)) is disordered. Residues 17 to 30 (PSFSRSDTQGSIKS) are compositionally biased toward polar residues. Ser-18 carries the post-translational modification Phosphoserine. The segment covering 40–51 (KGKDSNHDRRTS) has biased composition (basic and acidic residues). A compositionally biased stretch (pro residues) spans 63–74 (ETPPSLPPPPSP). A compositionally biased stretch (polar residues) spans 91-109 (DSGNSSQSPTSPHPSNQPA). The span at 126–143 (SSSSYAVSPTSPTSPTSS) shows a compositional bias: low complexity. Residues Asp-248, His-250, Asp-276, and Asn-308 each contribute to the Mn(2+) site. His-309 (proton donor) is an active-site residue. Residues His-357 and His-432 each coordinate Mn(2+). Ser-505 and Ser-514 each carry phosphoserine.

The protein belongs to the PPP phosphatase family. PP-Z subfamily. Mn(2+) serves as cofactor.

It localises to the cytoplasm. It catalyses the reaction O-phospho-L-seryl-[protein] + H2O = L-seryl-[protein] + phosphate. It carries out the reaction O-phospho-L-threonyl-[protein] + H2O = L-threonyl-[protein] + phosphate. In Schizosaccharomyces pombe (strain 972 / ATCC 24843) (Fission yeast), this protein is Serine/threonine-protein phosphatase PP-Z (pzh1).